A 389-amino-acid chain; its full sequence is tRNA(Met) cytidine acetate ligase (389 aa).

ATP contacts are provided by residues 8–21 (IAEF…HEYL), Gly-97, Asn-153, and Arg-176.

This sequence belongs to the TmcAL family.

It localises to the cytoplasm. It catalyses the reaction cytidine(34) in elongator tRNA(Met) + acetate + ATP = N(4)-acetylcytidine(34) in elongator tRNA(Met) + AMP + diphosphate. Functionally, catalyzes the formation of N(4)-acetylcytidine (ac(4)C) at the wobble position of elongator tRNA(Met), using acetate and ATP as substrates. First activates an acetate ion to form acetyladenylate (Ac-AMP) and then transfers the acetyl group to tRNA to form ac(4)C34. In Lactococcus lactis subsp. cremoris (strain SK11), this protein is tRNA(Met) cytidine acetate ligase.